Consider the following 567-residue polypeptide: 2-succinyl-5-enolpyruvyl-6-hydroxy-3-cyclohexene-1-carboxylate synthase (567 aa).

The protein belongs to the TPP enzyme family. MenD subfamily. Homodimer. The cofactor is Mg(2+). Mn(2+) is required as a cofactor. It depends on thiamine diphosphate as a cofactor.

The catalysed reaction is isochorismate + 2-oxoglutarate + H(+) = 5-enolpyruvoyl-6-hydroxy-2-succinyl-cyclohex-3-ene-1-carboxylate + CO2. It participates in quinol/quinone metabolism; 1,4-dihydroxy-2-naphthoate biosynthesis; 1,4-dihydroxy-2-naphthoate from chorismate: step 2/7. The protein operates within quinol/quinone metabolism; menaquinone biosynthesis. In terms of biological role, catalyzes the thiamine diphosphate-dependent decarboxylation of 2-oxoglutarate and the subsequent addition of the resulting succinic semialdehyde-thiamine pyrophosphate anion to isochorismate to yield 2-succinyl-5-enolpyruvyl-6-hydroxy-3-cyclohexene-1-carboxylate (SEPHCHC). This chain is 2-succinyl-5-enolpyruvyl-6-hydroxy-3-cyclohexene-1-carboxylate synthase, found in Yersinia pseudotuberculosis serotype I (strain IP32953).